The primary structure comprises 275 residues: Exosome complex component RRP40 (275 aa).

N-acetylalanine is present on A2. K151 is covalently cross-linked (Glycyl lysine isopeptide (Lys-Gly) (interchain with G-Cter in SUMO2)).

Belongs to the RRP40 family. As to quaternary structure, component of the RNA exosome core complex (Exo-9), composed of EXOSC1, EXOSC2, EXOSC3, EXOSC4, EXOSC5, EXOSC6, EXOSC7, EXOSC8 and EXOSC9; within the complex interacts with EXOSC5 and EXOSC9. The catalytically inactive RNA exosome core complex (Exo-9) associates with the catalytic subunit EXOSC10/RRP6. Exo-9 may associate with DIS3 to form the nucleolar exosome complex, or DIS3L to form the cytoplasmic exosome complex. Exo-9 is formed by a hexameric base ring consisting of the heterodimers EXOSC4-EXOSC9, EXOSC5-EXOSC8 and EXOSC6-EXOSC7, and a cap ring consisting of EXOSC1, EXOSC2 and EXOSC3. The RNA exosome complex associates with cofactors C1D/RRP47, MPHOSPH6/MPP6 and MTREX/MTR4. Interacts with MPHOSPH6/MPP6; the interaction is direct. Interacts with GTPBP1. Interacts with ZC3HAV1. Interacts with DDX17 only in the presence of ZC3HAV1 in an RNA-independent manner. Interacts with DHX36; this interaction occurs in a RNase-insensitive manner. Interacts with HBS1L isoform 2.

It localises to the cytoplasm. Its subcellular location is the nucleus. It is found in the nucleolus. In terms of biological role, non-catalytic component of the RNA exosome complex which has 3'-&gt;5' exoribonuclease activity and participates in a multitude of cellular RNA processing and degradation events. In the nucleus, the RNA exosome complex is involved in proper maturation of stable RNA species such as rRNA, snRNA and snoRNA, in the elimination of RNA processing by-products and non-coding 'pervasive' transcripts, such as antisense RNA species and promoter-upstream transcripts (PROMPTs), and of mRNAs with processing defects, thereby limiting or excluding their export to the cytoplasm. The RNA exosome may be involved in Ig class switch recombination (CSR) and/or Ig variable region somatic hypermutation (SHM) by targeting AICDA deamination activity to transcribed dsDNA substrates. In the cytoplasm, the RNA exosome complex is involved in general mRNA turnover and specifically degrades inherently unstable mRNAs containing AU-rich elements (AREs) within their 3' untranslated regions, and in RNA surveillance pathways, preventing translation of aberrant mRNAs. It seems to be involved in degradation of histone mRNA. The catalytic inactive RNA exosome core complex of 9 subunits (Exo-9) is proposed to play a pivotal role in the binding and presentation of RNA for ribonucleolysis, and to serve as a scaffold for the association with catalytic subunits and accessory proteins or complexes. EXOSC3 as peripheral part of the Exo-9 complex stabilizes the hexameric ring of RNase PH-domain subunits through contacts with EXOSC9 and EXOSC5. This Homo sapiens (Human) protein is Exosome complex component RRP40 (EXOSC3).